Here is a 390-residue protein sequence, read N- to C-terminus: tRNA (guanine(9)-N1)-methyltransferase (390 aa).

Positions 1–72 (MDIDEESYLN…RTAQLAEGYA (72 aa)) are disordered. A compositionally biased stretch (basic and acidic residues) spans 43–59 (ARLEEIKPLKRAAERER). Residues 92 to 340 (KERKEAQRRI…AVIPIRKYAP (249 aa)) form the SAM-dependent MTase TRM10-type domain. S-adenosyl-L-methionine contacts are provided by residues 246 to 247 (LS), Gly-266, 270 to 274 (DRNRH), Cys-278, Leu-292, and 305 to 307 (KVL). Catalysis depends on Asp-270, which acts as the Proton acceptor. Residues 343 to 390 (KTKRAKTETKRNEKEEEEVECTSAEGEEDIGVIEESAEVDPEDVFSNQ) form a disordered region. The span at 347-356 (AKTETKRNEK) shows a compositional bias: basic and acidic residues. Over residues 357-390 (EEEEVECTSAEGEEDIGVIEESAEVDPEDVFSNQ) the composition is skewed to acidic residues.

This sequence belongs to the class IV-like SAM-binding methyltransferase superfamily. TRM10 family. Monomer.

Its subcellular location is the cytoplasm. The protein localises to the nucleus. It carries out the reaction guanosine(9) in tRNA + S-adenosyl-L-methionine = N(1)-methylguanosine(9) in tRNA + S-adenosyl-L-homocysteine + H(+). Functionally, S-adenosyl-L-methionine-dependent guanine N(1)-methyltransferase that catalyzes the formation of N(1)-methylguanine at position 9 (m1G9) in cytoplasmic tRNA. The protein is tRNA (guanine(9)-N1)-methyltransferase of Cryptococcus neoformans var. neoformans serotype D (strain JEC21 / ATCC MYA-565) (Filobasidiella neoformans).